A 122-amino-acid polypeptide reads, in one-letter code: Ribonuclease P protein component (122 aa).

This sequence belongs to the RnpA family. As to quaternary structure, consists of a catalytic RNA component (M1 or rnpB) and a protein subunit.

It catalyses the reaction Endonucleolytic cleavage of RNA, removing 5'-extranucleotides from tRNA precursor.. Its function is as follows. RNaseP catalyzes the removal of the 5'-leader sequence from pre-tRNA to produce the mature 5'-terminus. It can also cleave other RNA substrates such as 4.5S RNA. The protein component plays an auxiliary but essential role in vivo by binding to the 5'-leader sequence and broadening the substrate specificity of the ribozyme. This chain is Ribonuclease P protein component, found in Lactobacillus johnsonii (strain CNCM I-12250 / La1 / NCC 533).